The sequence spans 254 residues: Thiazole synthase (254 aa).

The Schiff-base intermediate with DXP role is filled by K96. 1-deoxy-D-xylulose 5-phosphate is bound by residues G157, 183 to 184 (AG), and 205 to 206 (NT).

Belongs to the ThiG family. In terms of assembly, homotetramer. Forms heterodimers with either ThiH or ThiS.

It localises to the cytoplasm. It catalyses the reaction [ThiS sulfur-carrier protein]-C-terminal-Gly-aminoethanethioate + 2-iminoacetate + 1-deoxy-D-xylulose 5-phosphate = [ThiS sulfur-carrier protein]-C-terminal Gly-Gly + 2-[(2R,5Z)-2-carboxy-4-methylthiazol-5(2H)-ylidene]ethyl phosphate + 2 H2O + H(+). It participates in cofactor biosynthesis; thiamine diphosphate biosynthesis. Functionally, catalyzes the rearrangement of 1-deoxy-D-xylulose 5-phosphate (DXP) to produce the thiazole phosphate moiety of thiamine. Sulfur is provided by the thiocarboxylate moiety of the carrier protein ThiS. In vitro, sulfur can be provided by H(2)S. The polypeptide is Thiazole synthase (Clostridium kluyveri (strain ATCC 8527 / DSM 555 / NBRC 12016 / NCIMB 10680 / K1)).